We begin with the raw amino-acid sequence, 79 residues long: Cell division protein ZapB (79 aa).

Residues 4 to 78 (EVFEKLEAKV…LRALLGKMEE (75 aa)) adopt a coiled-coil conformation.

This sequence belongs to the ZapB family. In terms of assembly, homodimer. The ends of the coiled-coil dimer bind to each other, forming polymers. Interacts with FtsZ.

The protein localises to the cytoplasm. Functionally, non-essential, abundant cell division factor that is required for proper Z-ring formation. It is recruited early to the divisome by direct interaction with FtsZ, stimulating Z-ring assembly and thereby promoting cell division earlier in the cell cycle. Its recruitment to the Z-ring requires functional FtsA or ZipA. The chain is Cell division protein ZapB from Erwinia tasmaniensis (strain DSM 17950 / CFBP 7177 / CIP 109463 / NCPPB 4357 / Et1/99).